A 187-amino-acid chain; its full sequence is Orotate phosphoribosyltransferase (187 aa).

5-phospho-alpha-D-ribose 1-diphosphate-binding positions include Arg103, Lys104, Lys107, and 129–137; that span reads EDVTTSGGS. Residues Thr133 and Arg161 each contribute to the orotate site.

Belongs to the purine/pyrimidine phosphoribosyltransferase family. PyrE subfamily. In terms of assembly, homodimer. Requires Mg(2+) as cofactor.

The enzyme catalyses orotidine 5'-phosphate + diphosphate = orotate + 5-phospho-alpha-D-ribose 1-diphosphate. The protein operates within pyrimidine metabolism; UMP biosynthesis via de novo pathway; UMP from orotate: step 1/2. Its function is as follows. Catalyzes the transfer of a ribosyl phosphate group from 5-phosphoribose 1-diphosphate to orotate, leading to the formation of orotidine monophosphate (OMP). This Methanosarcina acetivorans (strain ATCC 35395 / DSM 2834 / JCM 12185 / C2A) protein is Orotate phosphoribosyltransferase.